Reading from the N-terminus, the 273-residue chain is Urease accessory protein UreD (273 aa).

It belongs to the UreD family. In terms of assembly, ureD, UreF and UreG form a complex that acts as a GTP-hydrolysis-dependent molecular chaperone, activating the urease apoprotein by helping to assemble the nickel containing metallocenter of UreC. The UreE protein probably delivers the nickel.

It localises to the cytoplasm. Its function is as follows. Required for maturation of urease via the functional incorporation of the urease nickel metallocenter. This chain is Urease accessory protein UreD, found in Bacillus cereus (strain ATCC 10987 / NRS 248).